The sequence spans 142 residues: Large ribosomal subunit protein uL13 (142 aa).

This sequence belongs to the universal ribosomal protein uL13 family. As to quaternary structure, part of the 50S ribosomal subunit.

Functionally, this protein is one of the early assembly proteins of the 50S ribosomal subunit, although it is not seen to bind rRNA by itself. It is important during the early stages of 50S assembly. The protein is Large ribosomal subunit protein uL13 of Glaesserella parasuis serovar 5 (strain SH0165) (Haemophilus parasuis).